A 124-amino-acid polypeptide reads, in one-letter code: Trophoblast-specific protein alpha (124 aa).

The first 18 residues, 1–18 (MTPTIFLVILCLGVASAV), serve as a signal peptide directing secretion. Disordered regions lie at residues 51 to 74 (KLHSSENDQETEGSNIEMSASGQL) and 91 to 124 (FEEEENKPQPVVDDPEFEDYTESGDGFFVPNQPQ). A compositionally biased stretch (polar residues) spans 62–74 (EGSNIEMSASGQL). Residues 103–112 (DDPEFEDYTE) are compositionally biased toward acidic residues.

The protein resides in the secreted. It localises to the extracellular space. It may be a growth factor/hormone, perhaps involved in interaction between the maternal and fetal systems in maintenance of pregnancy. This Mus musculus (Mouse) protein is Trophoblast-specific protein alpha (Tpbpa).